Here is a 502-residue protein sequence, read N- to C-terminus: TNF receptor-associated factor family protein DDB_G0268444 (502 aa).

The RING-type; degenerate zinc finger occupies 28-68 (CSICYESVYKKEIYQCKEIHWFCKTCWAESLFKKKECMICR). 2 consecutive TRAF-type zinc fingers follow at residues 129-183 (KHLK…SRSL) and 185-243 (NHYK…PKSN). Residues 261-295 (IESQSLQIKETNIKYENLLNKINKLEQLETESKCD) are a coiled coil. Residues 368–489 (KYKNRWSISN…DDSLVIDFSI (122 aa)) enclose the MATH domain.

It belongs to the TNF receptor-associated factor family. A subfamily.

It localises to the cytoplasm. Its function is as follows. Probable adapter protein and signal transducer that links members of the tumor necrosis factor receptor family to different signaling pathways by association with the receptor cytoplasmic domain and kinases. The chain is TNF receptor-associated factor family protein DDB_G0268444 from Dictyostelium discoideum (Social amoeba).